We begin with the raw amino-acid sequence, 252 residues long: Phosphoglycolate phosphatase (252 aa).

Catalysis depends on aspartate 13, which acts as the Nucleophile. Positions 13, 15, and 192 each coordinate Mg(2+).

It belongs to the HAD-like hydrolase superfamily. CbbY/CbbZ/Gph/YieH family. In terms of assembly, monomer. Mg(2+) serves as cofactor. The cofactor is chloride.

It catalyses the reaction 2-phosphoglycolate + H2O = glycolate + phosphate. It participates in organic acid metabolism; glycolate biosynthesis; glycolate from 2-phosphoglycolate: step 1/1. Functionally, specifically catalyzes the dephosphorylation of 2-phosphoglycolate. Is involved in the dissimilation of the intracellular 2-phosphoglycolate formed during the DNA repair of 3'-phosphoglycolate ends, a major class of DNA lesions induced by oxidative stress. This chain is Phosphoglycolate phosphatase, found in Escherichia coli O157:H7.